We begin with the raw amino-acid sequence, 121 residues long: Basic phospholipase A2 homolog GodMT-II (121 aa).

7 disulfide bridges follow: C26–C115, C28–C44, C43–C95, C49–C121, C50–C88, C57–C81, and C75–C86. The interval 105-117 is important for membrane-damaging activities in eukaryotes and bacteria; heparin-binding; that stretch reads KNYKIYPKPLCKK.

This sequence belongs to the phospholipase A2 family. Group II subfamily. K49 sub-subfamily. Monomer. Expressed by the venom gland.

It localises to the secreted. In terms of biological role, snake venom phospholipase A2 homolog that lacks enzymatic activity but shows high myotoxic activities. In vivo, induces a mild edema when subcutaneously injected into mice foot pad. The protein is Basic phospholipase A2 homolog GodMT-II of Cerrophidion godmani (Porthidium godmani).